Reading from the N-terminus, the 636-residue chain is Chaperone protein DnaK (636 aa).

Position 198 is a phosphothreonine; by autocatalysis (Thr-198). Positions 602–613 (QPAGEEQAGAAA) are enriched in low complexity. The interval 602 to 636 (QPAGEEQAGAAAHEGEAKGEKVVDADFEEVKEDKK) is disordered. The span at 614–625 (HEGEAKGEKVVD) shows a compositional bias: basic and acidic residues. The segment covering 626–636 (ADFEEVKEDKK) has biased composition (acidic residues).

The protein belongs to the heat shock protein 70 family.

Its function is as follows. Acts as a chaperone. The chain is Chaperone protein DnaK from Geotalea daltonii (strain DSM 22248 / JCM 15807 / FRC-32) (Geobacter daltonii).